The following is a 361-amino-acid chain: 5-formaminoimidazole-4-carboxamide-1-(beta)-D-ribofuranosyl 5'-monophosphate synthetase (361 aa).

Residues His-27 and Ser-94 each coordinate 5-amino-1-(5-phospho-beta-D-ribosyl)imidazole-4-carboxamide. Residues 116 to 348 (RQILRWEAER…MGQRIAKEIK (233 aa)) enclose the ATP-grasp domain. Residues 146–208 (PDEI…TNYC) and Glu-230 each bind ATP. 5-amino-1-(5-phospho-beta-D-ribosyl)imidazole-4-carboxamide is bound at residue Asn-258. Mg(2+)-binding residues include Gln-297 and Glu-310.

The protein belongs to the phosphohexose mutase family. The cofactor is Mg(2+). Mn(2+) serves as cofactor.

It carries out the reaction 5-amino-1-(5-phospho-beta-D-ribosyl)imidazole-4-carboxamide + formate + ATP = 5-formamido-1-(5-phospho-D-ribosyl)imidazole-4-carboxamide + ADP + phosphate. Its pathway is purine metabolism; IMP biosynthesis via de novo pathway; 5-formamido-1-(5-phospho-D-ribosyl)imidazole-4-carboxamide from 5-amino-1-(5-phospho-D-ribosyl)imidazole-4-carboxamide (formate route): step 1/1. In terms of biological role, catalyzes the ATP- and formate-dependent formylation of 5-aminoimidazole-4-carboxamide-1-beta-d-ribofuranosyl 5'-monophosphate (AICAR) to 5-formaminoimidazole-4-carboxamide-1-beta-d-ribofuranosyl 5'-monophosphate (FAICAR) in the absence of folates. In Methanococcus aeolicus (strain ATCC BAA-1280 / DSM 17508 / OCM 812 / Nankai-3), this protein is 5-formaminoimidazole-4-carboxamide-1-(beta)-D-ribofuranosyl 5'-monophosphate synthetase.